Here is a 306-residue protein sequence, read N- to C-terminus: Tryptophan 2,3-dioxygenase (306 aa).

Residues Phe-75–His-79, Tyr-137, and Arg-141 each bind substrate. His-264 contributes to the heme binding site. Thr-278 lines the substrate pocket.

The protein belongs to the tryptophan 2,3-dioxygenase family. Homotetramer. It depends on heme as a cofactor.

It catalyses the reaction L-tryptophan + O2 = N-formyl-L-kynurenine. It participates in amino-acid degradation; L-tryptophan degradation via kynurenine pathway; L-kynurenine from L-tryptophan: step 1/2. In terms of biological role, heme-dependent dioxygenase that catalyzes the oxidative cleavage of the L-tryptophan (L-Trp) pyrrole ring and converts L-tryptophan to N-formyl-L-kynurenine. Catalyzes the oxidative cleavage of the indole moiety. The sequence is that of Tryptophan 2,3-dioxygenase from Paraburkholderia phytofirmans (strain DSM 17436 / LMG 22146 / PsJN) (Burkholderia phytofirmans).